A 373-amino-acid chain; its full sequence is 4-hydroxy-3-methylbut-2-en-1-yl diphosphate synthase (flavodoxin) (373 aa).

The [4Fe-4S] cluster site is built by C270, C273, C305, and E312.

This sequence belongs to the IspG family. The cofactor is [4Fe-4S] cluster.

The catalysed reaction is (2E)-4-hydroxy-3-methylbut-2-enyl diphosphate + oxidized [flavodoxin] + H2O + 2 H(+) = 2-C-methyl-D-erythritol 2,4-cyclic diphosphate + reduced [flavodoxin]. The protein operates within isoprenoid biosynthesis; isopentenyl diphosphate biosynthesis via DXP pathway; isopentenyl diphosphate from 1-deoxy-D-xylulose 5-phosphate: step 5/6. Its function is as follows. Converts 2C-methyl-D-erythritol 2,4-cyclodiphosphate (ME-2,4cPP) into 1-hydroxy-2-methyl-2-(E)-butenyl 4-diphosphate. The protein is 4-hydroxy-3-methylbut-2-en-1-yl diphosphate synthase (flavodoxin) of Sodalis glossinidius (strain morsitans).